The chain runs to 465 residues: UDP-N-acetylmuramate--L-alanine ligase (465 aa).

Position 112 to 118 (112 to 118 (GTHGKTT)) interacts with ATP.

Belongs to the MurCDEF family.

The protein resides in the cytoplasm. The catalysed reaction is UDP-N-acetyl-alpha-D-muramate + L-alanine + ATP = UDP-N-acetyl-alpha-D-muramoyl-L-alanine + ADP + phosphate + H(+). The protein operates within cell wall biogenesis; peptidoglycan biosynthesis. Its function is as follows. Cell wall formation. The polypeptide is UDP-N-acetylmuramate--L-alanine ligase (Burkholderia multivorans (strain ATCC 17616 / 249)).